Consider the following 240-residue polypeptide: Tetraspanin-1 (240 aa).

The Cytoplasmic segment spans residues 1-9; it reads MQCFSFIKT. Residues 10 to 30 form a helical membrane-spanning segment; that stretch reads IMILFNLLIFLCGAALLAVGI. Residues 31 to 52 are Extracellular-facing; that stretch reads WVSIDGASFLKIFGPLSSSAMQ. Residues 53 to 73 traverse the membrane as a helical segment; the sequence is FVNVGYFLIAAGAVVFALGFL. Residues 74 to 88 lie on the Cytoplasmic side of the membrane; the sequence is GCYGAQTESKCALMT. Residues 89 to 109 form a helical membrane-spanning segment; sequence FFFILLLIFIAEVAAAVVALV. The Extracellular segment spans residues 110 to 210; sequence YTTMAEHFLT…QQLLYDIRTN (101 aa). N-linked (GlcNAc...) asparagine glycosylation occurs at Asn-154. A helical membrane pass occupies residues 211–231; that stretch reads AVTVGGVAAGIGGLELAAMIV. Residues 232 to 240 are Cytoplasmic-facing; it reads SMYLYCNLQ.

It belongs to the tetraspanin (TM4SF) family. As to quaternary structure, interacts with SLC19A2. Interacts with NTRK1/TRKA.

The protein resides in the lysosome membrane. Structural component of specialized membrane microdomains known as tetraspanin-enriched microdomains (TERMs), which act as platforms for receptor clustering and signaling. Participates thereby in diverse biological functions such as cell signal transduction, adhesion, migration and protein trafficking. Regulates neuronal differentiation in response to NGF by facilitating NGF-mediated activation of NTRK1/TRKA receptor tyrosine kinase and subsequent downstream signaling pathways. Plays a role in the inhibition of TNFalpha-induced apoptosis. Mechanistically, inhibits the NF-kappa-B signaling pathway by blocking phosphorylation of CHUK. Also promotes the stability of the thiamine transporter 1/SLC19A2 in intestinal epithelial cells leading to an increase of thiamine uptake process. The polypeptide is Tetraspanin-1 (TSPAN1) (Macaca fascicularis (Crab-eating macaque)).